Here is a 571-residue protein sequence, read N- to C-terminus: Dihydroxy-acid dehydratase (571 aa).

Residue cysteine 56 coordinates [2Fe-2S] cluster. Aspartate 88 is a Mg(2+) binding site. Cysteine 129 lines the [2Fe-2S] cluster pocket. Mg(2+) is bound by residues aspartate 130 and lysine 131. Lysine 131 is subject to N6-carboxylysine. [2Fe-2S] cluster is bound at residue cysteine 201. Glutamate 452 is a binding site for Mg(2+). The Proton acceptor role is filled by serine 478.

Belongs to the IlvD/Edd family. As to quaternary structure, homodimer. It depends on [2Fe-2S] cluster as a cofactor. Requires Mg(2+) as cofactor.

It carries out the reaction (2R)-2,3-dihydroxy-3-methylbutanoate = 3-methyl-2-oxobutanoate + H2O. It catalyses the reaction (2R,3R)-2,3-dihydroxy-3-methylpentanoate = (S)-3-methyl-2-oxopentanoate + H2O. It participates in amino-acid biosynthesis; L-isoleucine biosynthesis; L-isoleucine from 2-oxobutanoate: step 3/4. It functions in the pathway amino-acid biosynthesis; L-valine biosynthesis; L-valine from pyruvate: step 3/4. Functionally, functions in the biosynthesis of branched-chain amino acids. Catalyzes the dehydration of (2R,3R)-2,3-dihydroxy-3-methylpentanoate (2,3-dihydroxy-3-methylvalerate) into 2-oxo-3-methylpentanoate (2-oxo-3-methylvalerate) and of (2R)-2,3-dihydroxy-3-methylbutanoate (2,3-dihydroxyisovalerate) into 2-oxo-3-methylbutanoate (2-oxoisovalerate), the penultimate precursor to L-isoleucine and L-valine, respectively. This Streptococcus suis (strain 98HAH33) protein is Dihydroxy-acid dehydratase.